A 491-amino-acid polypeptide reads, in one-letter code: MSNVMVVPGMLSAAAADVASIGAALSAANGAAAPTTAGVLAAGADEVSAAIASLFSGYARDYQALSAQMARFHQQFVQALTASVGSYAAAEAANASPLQALEQQVLAAINAPTQTLLGRPLIGNGADGLPGQNGGAGGLLWGNGGNGGAGDAAHPNGGNGGDAGMFGNGGAGGAGYSPAAGTGAAGGAGGAGGAGGWLSGNGGAGGNGGTGASGADGGGGLPPVPASPGGNGGGGDAGGAAGMFGTGGAGGTGGDGGAGGAGDSPNSGANGARGGDGGNGAAGGAGGRLFGNGGAGGNGGTAGQGGDGGTALGAGGIGGDGGTGGAGGTGGTAGIGGSSAGAGGAGGDGGAGGTGGGSSMIGGKGGTGGNGGVGGTGGASALTIGNGSSAGAGGAGGAGGTGGTGGYIESLDGKGQAGNGGNGGNGAAGGAGGGGTGAGGNGGAGGNGGDGGPSQGGGNPGFGGDGGTGGPGGVGVPDGIGGANGAQGKHG.

A PE domain is found at Met1–Ala93. Gly residues-rich tracts occupy residues Asn207 to Leu221 and Gly229 to Gly238. Disordered regions lie at residues Asn207–Gly238, Asp255–Gly275, and Ala444–Gly491. A compositionally biased stretch (gly residues) spans Ala444 to Gly485.

Belongs to the mycobacterial PE family. PGRS subfamily.

It localises to the cell surface. The chain is PE-PGRS family protein PE_PGRS26 from Mycobacterium tuberculosis (strain ATCC 25618 / H37Rv).